We begin with the raw amino-acid sequence, 293 residues long: MATISAKLVKELRKKTGAGMMDCKKALTETDGDIDKAIDYLREKGIAKAAKKADRIAAEGLVHVETKGNDAVIVEINSETDFVARNEGFQELVKEIANQVLDTKAETVEALMETTLPNGKSVDERIKEAISTIGEKLSVRRFAIRTKTDNDAFGAYLHMGGRIGVLTVVEGSTDEEAARDVAMHIAAINPKYVSSEQVSEEEINHEREVLKQQALNEGKPENIVEKMVEGRLRKYLQEICAVDQDFVKNPDVTVEAFLKTKGGKLVDFVRYEVGEGMEKREENFADEVKGQMK.

The interval 80-83 is involved in Mg(2+) ion dislocation from EF-Tu; that stretch reads TDFV.

Belongs to the EF-Ts family.

It is found in the cytoplasm. In terms of biological role, associates with the EF-Tu.GDP complex and induces the exchange of GDP to GTP. It remains bound to the aminoacyl-tRNA.EF-Tu.GTP complex up to the GTP hydrolysis stage on the ribosome. The protein is Elongation factor Ts of Staphylococcus aureus (strain Mu3 / ATCC 700698).